The primary structure comprises 460 residues: Spermatogenesis-defective protein 39 homolog (460 aa).

Residue T21 is modified to Phosphothreonine. A disordered region spans residues 70–101 (SIKETAGSSGSTSEGREQMKGRNSFYTQLPKP). The segment covering 73-82 (ETAGSSGSTS) has biased composition (low complexity). T115 is modified (phosphothreonine). Phosphoserine occurs at positions 119, 122, and 128. A compositionally biased stretch (polar residues) spans 121-133 (QSLSDALSDTPAK). Residues 121 to 141 (QSLSDALSDTPAKTYSPELGR) form a disordered region. The residue at position 130 (T130) is a Phosphothreonine.

Belongs to the SPE39 family. Interacts with VPS33B. Associates with the homotypic fusion and vacuole protein sorting (HOPS) complex; impaired by VPS33B. Interacts with RAB11A.

It is found in the cytoplasm. It localises to the cytoplasmic vesicle. The protein resides in the early endosome. The protein localises to the recycling endosome. Its subcellular location is the late endosome. In terms of biological role, proposed to be involved in endosomal maturation implicating in part VPS33B. In epithelial cells, the VPS33B:VIPAS39 complex may play a role in the apical RAB11A-dependent recycling pathway and in the maintenance of the apical-basolateral polarity. May play a role in lysosomal trafficking, probably via association with the core HOPS complex in a discrete population of endosomes; the functions seems to be independent of VPS33B. May play a role in vesicular trafficking during spermatogenesis. May be involved in direct or indirect transcriptional regulation of E-cadherin. The sequence is that of Spermatogenesis-defective protein 39 homolog (Vipas39) from Rattus norvegicus (Rat).